The following is a 90-amino-acid chain: DNA-binding protein HU-beta (90 aa).

It belongs to the bacterial histone-like protein family. As to quaternary structure, heterodimer of an alpha and a beta chain.

Histone-like DNA-binding protein which is capable of wrapping DNA to stabilize it, and thus to prevent its denaturation under extreme environmental conditions. This is DNA-binding protein HU-beta (hupB) from Pseudomonas fluorescens (strain ATCC BAA-477 / NRRL B-23932 / Pf-5).